The following is a 223-amino-acid chain: uncharacterized protein (223 aa).

The protein resides in the plastid. It is found in the chloroplast. This is an uncharacterized protein from Mesostigma viride (Green alga).